Consider the following 1334-residue polypeptide: DNA-directed RNA polymerase subunit beta' (1334 aa).

Cys213, Cys284, Cys291, and Cys294 together coordinate Zn(2+). Over residues 1299-1308 (SSRGSSRFSR) the composition is skewed to low complexity. A disordered region spans residues 1299–1334 (SSRGSSRFSRQPISDRWSEADEEGEEDDFEEDYEEE). Over residues 1318–1334 (ADEEGEEDDFEEDYEEE) the composition is skewed to acidic residues.

It belongs to the RNA polymerase beta' chain family. RpoC2 subfamily. As to quaternary structure, in cyanobacteria the RNAP catalytic core is composed of 2 alpha, 1 beta, 1 beta', 1 gamma and 1 omega subunit. When a sigma factor is associated with the core the holoenzyme is formed, which can initiate transcription. It depends on Zn(2+) as a cofactor.

It catalyses the reaction RNA(n) + a ribonucleoside 5'-triphosphate = RNA(n+1) + diphosphate. Its function is as follows. DNA-dependent RNA polymerase catalyzes the transcription of DNA into RNA using the four ribonucleoside triphosphates as substrates. This Microcystis aeruginosa (strain NIES-843 / IAM M-2473) protein is DNA-directed RNA polymerase subunit beta'.